Reading from the N-terminus, the 455-residue chain is Ammonium transporter Rh type B (455 aa).

Over methionine 1–leucine 10 the chain is Cytoplasmic. Residues valine 11–valine 31 form a helical membrane-spanning segment. At arginine 32–tyrosine 58 the chain is on the extracellular side. Asparagine 46 is a glycosylation site (N-linked (GlcNAc...) asparagine). Residues proline 59–leucine 79 form a helical membrane-spanning segment. Residues glutamine 80–glycine 83 are Cytoplasmic-facing. Residues phenylalanine 84–leucine 104 form a helical membrane-spanning segment. The Extracellular portion of the chain corresponds to glutamine 105 to glutamate 121. The chain crosses the membrane as a helical span at residues serine 122 to glycine 142. Residues lysine 143–glutamine 148 lie on the Cytoplasmic side of the membrane. The helical transmembrane segment at leucine 149 to serine 169 threads the bilayer. Topologically, residues leucine 170–alanine 176 are extracellular. A helical transmembrane segment spans residues glycine 177–leucine 197. Residues tyrosine 198–aspartate 216 are Cytoplasmic-facing. Residues leucine 217–proline 237 form a helical membrane-spanning segment. At threonine 238 to threonine 247 the chain is on the extracellular side. Residues valine 248 to serine 270 form a helical membrane-spanning segment. Over glycine 271–arginine 274 the chain is Cytoplasmic. A helical membrane pass occupies residues leucine 275 to serine 295. Position 296 (glutamate 296) is a topological domain, extracellular. The helical transmembrane segment at methionine 297 to leucine 317 threads the bilayer. Residues glycine 318–asparagine 340 are Cytoplasmic-facing. A helical transmembrane segment spans residues leucine 341–threonine 361. Topologically, residues histidine 362–glutamine 390 are extracellular. Residues leucine 391–leucine 411 form a helical membrane-spanning segment. Over leucine 412–alanine 455 the chain is Cytoplasmic. The segment at lysine 413 to proline 421 is interaction with ANK3.

The protein belongs to the ammonium transporter (TC 2.A.49) family. Rh subfamily. As to quaternary structure, interacts (via C-terminus) with ANK2 and ANK3; required for targeting to the basolateral membrane. N-glycosylated. Expressed in kidney by connecting segments and collecting tubules (at protein level).

It localises to the basolateral cell membrane. Its subcellular location is the cytoplasmic vesicle membrane. It catalyses the reaction NH4(+)(in) = NH4(+)(out). The enzyme catalyses methylamine(out) = methylamine(in). It carries out the reaction CO2(out) = CO2(in). Ammonium transporter involved in the maintenance of acid-base homeostasis. Transports ammonium and its related derivative methylammonium across the basolateral plasma membrane of epithelial cells likely contributing to renal transepithelial ammonia transport and ammonia metabolism. May transport either NH4(+) or NH3 ammonia species predominantly mediating an electrogenic NH4(+) transport. May act as a CO2 channel providing for renal acid secretion. In Rattus norvegicus (Rat), this protein is Ammonium transporter Rh type B (Rhbg).